Here is a 614-residue protein sequence, read N- to C-terminus: Aspartate--tRNA ligase (614 aa).

Glu-174 contributes to the L-aspartate binding site. The interval 198–201 (QLFK) is aspartate. Arg-220 contributes to the L-aspartate binding site. Residues 220-222 (RDE) and Gln-229 contribute to the ATP site. An L-aspartate-binding site is contributed by His-448. Glu-482 lines the ATP pocket. Arg-489 lines the L-aspartate pocket. 534–537 (GLDR) is a binding site for ATP. The disordered stretch occupies residues 587–614 (YEDSVKETEQRLEKEAQEDADKNSTWDE).

Belongs to the class-II aminoacyl-tRNA synthetase family. Type 1 subfamily. As to quaternary structure, homodimer.

It is found in the cytoplasm. The catalysed reaction is tRNA(Asp) + L-aspartate + ATP = L-aspartyl-tRNA(Asp) + AMP + diphosphate. Functionally, catalyzes the attachment of L-aspartate to tRNA(Asp) in a two-step reaction: L-aspartate is first activated by ATP to form Asp-AMP and then transferred to the acceptor end of tRNA(Asp). The chain is Aspartate--tRNA ligase from Lactobacillus johnsonii (strain CNCM I-12250 / La1 / NCC 533).